The following is a 199-amino-acid chain: Recombination protein RecR (199 aa).

The C4-type zinc-finger motif lies at 56–71 (CSICFNWSAEDPCEIC). Residues 79–174 (STWCVVADVK…GLRMTRLAFG (96 aa)) form the Toprim domain.

Belongs to the RecR family.

May play a role in DNA repair. It seems to be involved in an RecBC-independent recombinational process of DNA repair. It may act with RecF and RecO. The protein is Recombination protein RecR of Synechococcus sp. (strain JA-3-3Ab) (Cyanobacteria bacterium Yellowstone A-Prime).